A 137-amino-acid polypeptide reads, in one-letter code: Small ribosomal subunit protein uS9 (137 aa).

Residues 105–137 form a disordered region; that stretch reads LKTEGYLKRDPRAVERKKYGLRKARKAPQYSKR. A compositionally biased stretch (basic and acidic residues) spans 109–122; the sequence is GYLKRDPRAVERKK. Residues 123–137 show a composition bias toward basic residues; that stretch reads YGLRKARKAPQYSKR.

This sequence belongs to the universal ribosomal protein uS9 family.

The protein is Small ribosomal subunit protein uS9 of Synechococcus sp. (strain JA-3-3Ab) (Cyanobacteria bacterium Yellowstone A-Prime).